Consider the following 197-residue polypeptide: Imidazoleglycerol-phosphate dehydratase (197 aa).

This sequence belongs to the imidazoleglycerol-phosphate dehydratase family.

The protein resides in the cytoplasm. The enzyme catalyses D-erythro-1-(imidazol-4-yl)glycerol 3-phosphate = 3-(imidazol-4-yl)-2-oxopropyl phosphate + H2O. The protein operates within amino-acid biosynthesis; L-histidine biosynthesis; L-histidine from 5-phospho-alpha-D-ribose 1-diphosphate: step 6/9. This is Imidazoleglycerol-phosphate dehydratase from Methylococcus capsulatus (strain ATCC 33009 / NCIMB 11132 / Bath).